We begin with the raw amino-acid sequence, 201 residues long: Protein GrpE (201 aa).

The protein belongs to the GrpE family. Homodimer.

The protein localises to the cytoplasm. Participates actively in the response to hyperosmotic and heat shock by preventing the aggregation of stress-denatured proteins, in association with DnaK and GrpE. It is the nucleotide exchange factor for DnaK and may function as a thermosensor. Unfolded proteins bind initially to DnaJ; upon interaction with the DnaJ-bound protein, DnaK hydrolyzes its bound ATP, resulting in the formation of a stable complex. GrpE releases ADP from DnaK; ATP binding to DnaK triggers the release of the substrate protein, thus completing the reaction cycle. Several rounds of ATP-dependent interactions between DnaJ, DnaK and GrpE are required for fully efficient folding. The sequence is that of Protein GrpE from Shewanella denitrificans (strain OS217 / ATCC BAA-1090 / DSM 15013).